Here is a 157-residue protein sequence, read N- to C-terminus: Transcriptional repressor NrdR (157 aa).

A zinc finger lies at 3-34 (CPFCRHPDSRVIDSRTSDDGLSIRRRRQCPEC). The ATP-cone domain maps to 46 to 136 (LSVIKRSGVV…VYQAFDSLED (91 aa)).

It belongs to the NrdR family. Zn(2+) serves as cofactor.

Negatively regulates transcription of bacterial ribonucleotide reductase nrd genes and operons by binding to NrdR-boxes. The protein is Transcriptional repressor NrdR of Leifsonia xyli subsp. xyli (strain CTCB07).